The chain runs to 152 residues: Keratin, high-sulfur matrix protein, B2C (152 aa).

Alanine 2 is subject to N-acetylalanine. Repeats lie at residues 27–36, 37–46, and 47–56; these read STCSQTSCCQ, PTSIQTSCCQ, and PTCLQTSGCE.

Functionally, the keratin products of mammalian epidermal derivatives such as wool and hair consist of microfibrils embedded in a rigid matrix of other proteins. The matrix proteins include the high-sulfur and high-tyrosine keratins, having molecular weights of 6-20 kDa, whereas the microfibrils contain the larger, low-sulfur keratins (40-56 kDa). This is Keratin, high-sulfur matrix protein, B2C from Ovis aries (Sheep).